The primary structure comprises 199 residues: Putative peroxiredoxin ycf42 (199 aa).

The Thioredoxin domain maps to 8–165 (LRVGQLAPDF…TLRVLQAIQY (158 aa)). C53 functions as the Cysteine sulfenic acid (-SOH) intermediate in the catalytic mechanism.

Belongs to the peroxiredoxin family. AhpC/Prx1 subfamily. As to quaternary structure, homodimer; disulfide-linked, upon oxidation. The Cys-53-SH group is the primary site of oxidation by H(2)O(2), and the oxidized Cys-53 (probably Cys-SOH) rapidly reacts with Cys-174-SH of the other subunit to form an intermolecular disulfide. This disulfide is subsequently reduced by thioredoxin.

The protein resides in the plastid. Its subcellular location is the chloroplast. The enzyme catalyses a hydroperoxide + [thioredoxin]-dithiol = an alcohol + [thioredoxin]-disulfide + H2O. Thiol-specific peroxidase that catalyzes the reduction of hydrogen peroxide and organic hydroperoxides to water and alcohols, respectively. Plays a role in cell protection against oxidative stress by detoxifying peroxides. The chain is Putative peroxiredoxin ycf42 (ycf42) from Pyropia yezoensis (Susabi-nori).